The following is a 114-amino-acid chain: Abscisic stress-ripening protein 2 (114 aa).

Disordered regions lie at residues 1–25 (MAEE…GGPV) and 88–114 (FHEH…HHHY). Over residues 7–16 (QHHHHLFHHK) the composition is skewed to basic residues. A compositionally biased stretch (basic and acidic residues) spans 97-107 (AKKEKKEVEGG).

The protein belongs to the abscisic acid and water stress-induced protein family.

The polypeptide is Abscisic stress-ripening protein 2 (Solanum lycopersicum (Tomato)).